A 374-amino-acid polypeptide reads, in one-letter code: Putative cullin-like protein 2 (374 aa).

It belongs to the cullin family.

This is Putative cullin-like protein 2 from Arabidopsis thaliana (Mouse-ear cress).